A 129-amino-acid polypeptide reads, in one-letter code: CD59B glycoprotein (129 aa).

The N-terminal stretch at 1-23 (MRAQRGLILLLLLLAVFCSTAVS) is a signal peptide. In terms of domain architecture, UPAR/Ly6 spans 24–107 (LKCYNCLDPV…GLEEPNNAET (84 aa)). 5 disulfides stabilise this stretch: cysteine 26–cysteine 49, cysteine 29–cysteine 36, cysteine 42–cysteine 62, cysteine 68–cysteine 86, and cysteine 87–cysteine 92. N-linked (GlcNAc...) asparagine glycosylation occurs at asparagine 39. A lipid anchor (GPI-anchor amidated asparagine) is attached at asparagine 104. Residues 105–129 (AETSSLRKTALLGTSVLVAILKFCF) constitute a propeptide, removed in mature form.

In terms of assembly, interacts with T-cell surface antigen CD2. In terms of processing, N- and O-glycosylated. In terms of tissue distribution, widely expressed in the kidneys, brain, lungs, spleen and testis Testis-specific.

It is found in the cell membrane. It localises to the secreted. Functionally, potent inhibitor of the complement membrane attack complex (MAC) action, which protects self-cells from damage during complement activation. Acts by binding to the beta-haipins of C8 (C8A and C8B) components of the assembling MAC, forming an intermolecular beta-sheet that prevents incorporation of the multiple copies of C9 required for complete formation of the osmolytic pore. This is CD59B glycoprotein from Mus musculus (Mouse).